The following is a 1228-amino-acid chain: Serine/threonine-protein kinase CST20 (1228 aa).

Residues 1 to 18 (MSILSENNPTQTSITDPN) are compositionally biased toward polar residues. Disordered regions lie at residues 1–382 (MSIL…TAHN) and 405–468 (NSTN…HSQE). Low complexity-rich tracts occupy residues 57–70 (NTTS…SLGS) and 95–123 (ESGS…NPES). Residues 148–159 (HQGDDSDNEKQY) are compositionally biased toward basic and acidic residues. Polar residues-rich tracts occupy residues 173–195 (DSYS…NNVS), 205–222 (TSSL…NENA), and 232–244 (PQVS…SFHD). Positions 246 to 255 (SSVISSSTSV) are enriched in low complexity. 2 stretches are compositionally biased toward polar residues: residues 260–275 (SNPT…SYKS) and 309–328 (DTLS…TLQG). Residues 347-367 (NTSATSRNTSGTSTSTVVKNS) show a composition bias toward low complexity. Over residues 368–382 (RSGTSKLTSTSTAHN) the composition is skewed to polar residues. Residues 437 to 466 (KVRGVFSSMFGKNKSTSSSSSSNSGSNSHS) show a composition bias toward low complexity. The 14-residue stretch at 473–486 (ISTPFNAKHLAHVG) folds into the CRIB domain. 2 disordered regions span residues 543–829 (FHFD…ALAD) and 865–917 (LREK…KQAA). The span at 548 to 559 (NKSSSSGWSNEN) shows a compositional bias: polar residues. A compositionally biased stretch (gly residues) spans 568–579 (SNSGSGGGGGGA). Over residues 602–611 (ITPSQSMPTK) the composition is skewed to polar residues. Over residues 612 to 626 (TESKQSENQHPHEDN) the composition is skewed to basic and acidic residues. Residues 627-640 (ATQYTPRTPTSHVQ) are compositionally biased toward polar residues. Composition is skewed to low complexity over residues 668–681 (PSSQ…SQSD), 693–708 (ISPS…SKSL), and 734–747 (SIPK…SLSS). Residues 748 to 759 (QLRPATNGSTTA) are compositionally biased toward polar residues. Residues 787–805 (APPPPPSASPAPPVPPAPP) are compositionally biased toward pro residues. Residues 809-824 (LSEQTSEIPQQRTAPS) are compositionally biased toward polar residues. Residues 865–874 (LREKNERQNR) are compositionally biased toward basic and acidic residues. The span at 875-890 (QQETGQNNADTASGGS) shows a compositional bias: polar residues. The Protein kinase domain maps to 951–1203 (YVDLVKIGQG…ADELLHDNFI (253 aa)). Residues 957–965 (IGQGASGGV) and K981 each bind ATP. Catalysis depends on D1071, which acts as the Proton acceptor.

Belongs to the protein kinase superfamily. STE Ser/Thr protein kinase family. STE20 subfamily.

The protein resides in the cytoplasm. Its subcellular location is the nucleus. The catalysed reaction is L-seryl-[protein] + ATP = O-phospho-L-seryl-[protein] + ADP + H(+). It catalyses the reaction L-threonyl-[protein] + ATP = O-phospho-L-threonyl-[protein] + ADP + H(+). In terms of biological role, MAP4K component of the MAPK pathway required for the mating pheromone response, and the regulation of cell polarity and cell cycle. Phosphorylates histone H2B to form H2BS10ph. Required for hyphal formation and virulence. The sequence is that of Serine/threonine-protein kinase CST20 (CST20) from Candida albicans (strain SC5314 / ATCC MYA-2876) (Yeast).